Here is a 340-residue protein sequence, read N- to C-terminus: Phosphoribosylformylglycinamidine cyclo-ligase (340 aa).

Belongs to the AIR synthase family.

The protein localises to the cytoplasm. The enzyme catalyses 2-formamido-N(1)-(5-O-phospho-beta-D-ribosyl)acetamidine + ATP = 5-amino-1-(5-phospho-beta-D-ribosyl)imidazole + ADP + phosphate + H(+). The protein operates within purine metabolism; IMP biosynthesis via de novo pathway; 5-amino-1-(5-phospho-D-ribosyl)imidazole from N(2)-formyl-N(1)-(5-phospho-D-ribosyl)glycinamide: step 2/2. This Streptococcus pyogenes serotype M18 (strain MGAS8232) protein is Phosphoribosylformylglycinamidine cyclo-ligase.